A 103-amino-acid chain; its full sequence is Nucleoid-associated protein Cgl0243/cg0297 (103 aa).

The protein belongs to the YbaB/EbfC family. In terms of assembly, homodimer.

It localises to the cytoplasm. It is found in the nucleoid. Binds to DNA and alters its conformation. May be involved in regulation of gene expression, nucleoid organization and DNA protection. The sequence is that of Nucleoid-associated protein Cgl0243/cg0297 from Corynebacterium glutamicum (strain ATCC 13032 / DSM 20300 / JCM 1318 / BCRC 11384 / CCUG 27702 / LMG 3730 / NBRC 12168 / NCIMB 10025 / NRRL B-2784 / 534).